The following is a 793-amino-acid chain: Kinesin-associated protein 3 (793 aa).

Position 60 is a phosphoserine (S60). A compositionally biased stretch (basic and acidic residues) spans 103-119 (LPGKEKKEKSSKPKDPP). Residues 103–123 (LPGKEKKEKSSKPKDPPPFEG) form a disordered region. ARM repeat units follow at residues 333–373 (FMEN…NLSF), 374–412 (DTGL…HISM), 494–533 (DGPT…NLTI), 578–620 (DDSC…QMVF), and 621–662 (HQAT…IIAE).

In terms of assembly, interacts with SMC3 subunit of the cohesin complex. Heterotrimer of KIFAP3, KIF3A and KIF3B. Interacts with RAP1GDS1/SMG GDS. Post-translationally, phosphorylated on tyrosine residues by SRC in vitro; this reduces the binding affinity of the protein for RAP1GDS1.

Involved in tethering the chromosomes to the spindle pole and in chromosome movement. Binds to the tail domain of the KIF3A/KIF3B heterodimer to form a heterotrimeric KIF3 complex and may regulate the membrane binding of this complex. In Mus musculus (Mouse), this protein is Kinesin-associated protein 3 (Kifap3).